The chain runs to 789 residues: Bifunctional purine biosynthetic protein PUR2,5 (789 aa).

Positions methionine 1–phenylalanine 428 are GARS. The 208-residue stretch at lysine 114–glutamate 321 folds into the ATP-grasp domain. Residue isoleucine 140–serine 201 participates in ATP binding. Positions 291 and 293 each coordinate Mg(2+). The tract at residues leucine 438 to glutamate 773 is AIRS.

The protein in the N-terminal section; belongs to the GARS family. It in the C-terminal section; belongs to the AIR synthase family. Mg(2+) is required as a cofactor. The cofactor is Mn(2+).

It is found in the cytoplasm. The protein resides in the cytosol. The catalysed reaction is 2-formamido-N(1)-(5-O-phospho-beta-D-ribosyl)acetamidine + ATP = 5-amino-1-(5-phospho-beta-D-ribosyl)imidazole + ADP + phosphate + H(+). It catalyses the reaction 5-phospho-beta-D-ribosylamine + glycine + ATP = N(1)-(5-phospho-beta-D-ribosyl)glycinamide + ADP + phosphate + H(+). The protein operates within purine metabolism; IMP biosynthesis via de novo pathway; 5-amino-1-(5-phospho-D-ribosyl)imidazole from N(2)-formyl-N(1)-(5-phospho-D-ribosyl)glycinamide: step 2/2. It participates in purine metabolism; IMP biosynthesis via de novo pathway; N(1)-(5-phospho-D-ribosyl)glycinamide from 5-phospho-alpha-D-ribose 1-diphosphate: step 2/2. Catalyzes the second and fifth step in the 'de novo' purine biosynthesis pathway; contains phosphoribosylamine--glycine ligase (GARS) and phosphoribosylformylglycinamidine cyclo-ligase (AIRS) activities. This is Bifunctional purine biosynthetic protein PUR2,5 from Pichia angusta (Yeast).